Reading from the N-terminus, the 314-residue chain is Oxidoreductase poxI (314 aa).

It belongs to the NmrA-type oxidoreductase family. Isoflavone reductase subfamily.

It functions in the pathway secondary metabolite biosynthesis. Its function is as follows. Oxidoreductase; part of the gene cluster that mediates the biosynthesis of oxaleimides, cytotoxic compounds containing an unusual disubstituted succinimide moiety. The first step of the pathway is provided by the HR-PKS poxF that serves in a new mode of collaborative biosynthesis with the PKS-NRPS poxE, by providing the olefin containing amino acid substrate via the synthesis of an ACP-bound dec-4-enoate. The cytochrome P450 monooxygenase poxM-catalyzed oxidation at the alpha-position creates the enzyme-bound 2-hydroxydec-4-enoyl-ACP thioester, which may be prone to spontaneous hydrolysis to yield 2-hydroxydec-4-enoic acid due to increased electrophilicity of the carbonyl. 2-hydroxydec-4-enoic acid can then be further oxidized by poxM to yield the alpha-ketoacid 2-oxodec-4-enoicacid, which is reductively aminated by the aminotransferase poxL to yield (S,E)-2-aminodec-4-enoic acid. The Hybrid PKS-NRPS synthetase poxE then performs condensation between the octaketide product of its PKS modules and the amino group of (S,E)-2-aminodec-4-enoic acid which is activated and incorporated by the adenylation domain. The resulting aminoacyl product can be cyclized by the Diels-Alderase PoxQ and reductively released by the reductive (R) domain of poxE to yield an aldehyde intermediate. The released aldehyde is then substrate for a Knoevenagel condensation by the hydrolyase poxO followed by an oxidation at the 5-position of the pyrrolidone ring. The presence of the olefin from the amino acid building block allows for migration of the substituted allyl group to occur. This allylic transposition reaction takes place in a conjugate addition, semipinacol-like fashion to yield a succinimide intermediate. Iterative two-electron oxidations of the C7 methyl of the succinimide intermediate to the carboxylic acid can be catalyzed by one of two remaining cytochrome P450 monooxygenasess poxC or poxD to yield oxaleimide A. Subsequent oxidation yields the maleimide scaffold oxaleimide I. Both oxaleimide A and oxaleimide I can undergo oxidative modifications in the decalin ring to yield the series of products oxaleimides B to H. The sequence is that of Oxidoreductase poxI from Penicillium oxalicum (strain 114-2 / CGMCC 5302) (Penicillium decumbens).